The sequence spans 874 residues: DNA mismatch repair protein MutS (874 aa).

A compositionally biased stretch (basic and acidic residues) spans 1 to 12 (MSNDRPLTHSEA). The interval 1–20 (MSNDRPLTHSEAESSALRLG) is disordered. 661–668 (GPNASGKS) lines the ATP pocket. Residues 854-874 (RKSSMGDPPTAPEINQGELPF) form a disordered region.

This sequence belongs to the DNA mismatch repair MutS family.

In terms of biological role, this protein is involved in the repair of mismatches in DNA. It is possible that it carries out the mismatch recognition step. This protein has a weak ATPase activity. The protein is DNA mismatch repair protein MutS of Thermosynechococcus vestitus (strain NIES-2133 / IAM M-273 / BP-1).